Consider the following 292-residue polypeptide: MTSGSGPRSDAMHREKNFPVASWIIHPRHRALILAFYRFVRMADDIADHATLAPDEKLLYLDLLEAELLGKGETRAEAVHLRTALDRRGMPPRHALDLLTAFRMDVTKQRYENWDEVIDYCRYSAMPVGRFVLDVHGESAATWPASDVLCAGLQVCNHLQDCGKDFLNLNRVYIPRDALSASGASIEELGAAKSSLQMLQCLRSLAAKAEVLLNGGGALVSQVKDFRLRFEVSVILSFADKIVSMLKMRDPLRERVHLSPLELLLHGVGAMANEAARRAFGRGTRFKTTVDV.

It belongs to the phytoene/squalene synthase family. HpnC subfamily.

The enzyme catalyses presqualene diphosphate + H2O = hydroxysqualene + diphosphate. The protein operates within secondary metabolite biosynthesis; hopanoid biosynthesis. Involved in the biosynthesis of the hopanoid precursor squalene (SQ) from farnesyl diphosphate (FPP). Catalyzes the second step, the conversion of presqualene diphosphate (PSPP) to hydroxysqualene (HSQ). The sequence is that of Hydroxysqualene synthase from Sinorhizobium fredii (strain NBRC 101917 / NGR234).